Consider the following 300-residue polypeptide: Iodotyrosine deiodinase (300 aa).

The helical transmembrane segment at Val15–Leu31 threads the bilayer. Residues Arg110 to Arg114, Ser138, and Ser138 to Gly139 each bind FMN. 3,5-diiodo-L-tyrosine is bound by residues Ala140, Glu167, Tyr171, and Lys192. 4 residues coordinate 3-iodo-L-tyrosine: Ala140, Glu167, Tyr171, and Lys192. Residues Thr247–Thr249 and Arg289 each bind FMN.

This sequence belongs to the nitroreductase family. Requires FMN as cofactor. Post-translationally, may be cleaved at Gln-55. The cleaved form retains catalytic activity.

It localises to the membrane. It carries out the reaction 2 iodide + L-tyrosine + 2 NADP(+) = 3,5-diiodo-L-tyrosine + 2 NADPH + H(+). The enzyme catalyses iodide + L-tyrosine + NADP(+) = 3-iodo-L-tyrosine + NADPH. The catalysed reaction is 3-iodo-L-tyrosine + iodide + NADP(+) = 3,5-diiodo-L-tyrosine + NADPH + H(+). It catalyses the reaction L-tyrosine + chloride + NADP(+) = 3-chloro-L-tyrosine + NADPH. It carries out the reaction bromide + L-tyrosine + NADP(+) = 3-bromo-L-tyrosine + NADPH. Its function is as follows. Catalyzes the dehalogenation of halotyrosines such as 3,5-diiodo-L-tyrosine. Likely to also catalyze the dehalogenation of other halotyrosines such as 3-bromo-L-tyrosine, 3-chloro-L-tyrosine and 3-iodo-L-tyrosine. This is Iodotyrosine deiodinase from Daphnia pulex (Water flea).